The sequence spans 839 residues: Elongation factor 2 (839 aa).

Residues 17-248 enclose the tr-type G domain; sequence ENIRNMSVIA…MGRLWGDSYF (232 aa). Residues 26–33, 156–159, and 211–213 contribute to the GTP site; these read AHVDHGKT, NKVD, and SGL. Histidine 698 carries the diphthamide modification.

Belongs to the TRAFAC class translation factor GTPase superfamily. Classic translation factor GTPase family. EF-G/EF-2 subfamily. Phosphorylation by EF-2 kinase completely inactivates EF-2.

Its subcellular location is the cytoplasm. The enzyme catalyses GTP + H2O = GDP + phosphate + H(+). Functionally, catalyzes the GTP-dependent ribosomal translocation step during translation elongation. During this step, the ribosome changes from the pre-translocational (PRE) to the post-translocational (POST) state as the newly formed A-site-bound peptidyl-tRNA and P-site-bound deacylated tRNA move to the P and E sites, respectively. Catalyzes the coordinated movement of the two tRNA molecules, the mRNA and conformational changes in the ribosome. This Dictyostelium discoideum (Social amoeba) protein is Elongation factor 2 (efbA).